The sequence spans 562 residues: Dihydroxy-acid dehydratase (562 aa).

Asp-78 is a Mg(2+) binding site. Cys-119 is a [2Fe-2S] cluster binding site. Residues Asp-120 and Lys-121 each coordinate Mg(2+). Lys-121 is modified (N6-carboxylysine). Cys-192 is a binding site for [2Fe-2S] cluster. Residue Glu-450 coordinates Mg(2+). Ser-476 acts as the Proton acceptor in catalysis.

The protein belongs to the IlvD/Edd family. As to quaternary structure, homodimer. [2Fe-2S] cluster serves as cofactor. Mg(2+) is required as a cofactor.

The enzyme catalyses (2R)-2,3-dihydroxy-3-methylbutanoate = 3-methyl-2-oxobutanoate + H2O. It catalyses the reaction (2R,3R)-2,3-dihydroxy-3-methylpentanoate = (S)-3-methyl-2-oxopentanoate + H2O. It participates in amino-acid biosynthesis; L-isoleucine biosynthesis; L-isoleucine from 2-oxobutanoate: step 3/4. It functions in the pathway amino-acid biosynthesis; L-valine biosynthesis; L-valine from pyruvate: step 3/4. Its function is as follows. Functions in the biosynthesis of branched-chain amino acids. Catalyzes the dehydration of (2R,3R)-2,3-dihydroxy-3-methylpentanoate (2,3-dihydroxy-3-methylvalerate) into 2-oxo-3-methylpentanoate (2-oxo-3-methylvalerate) and of (2R)-2,3-dihydroxy-3-methylbutanoate (2,3-dihydroxyisovalerate) into 2-oxo-3-methylbutanoate (2-oxoisovalerate), the penultimate precursor to L-isoleucine and L-valine, respectively. The polypeptide is Dihydroxy-acid dehydratase (Nautilia profundicola (strain ATCC BAA-1463 / DSM 18972 / AmH)).